The sequence spans 102 residues: Large ribosomal subunit protein mL63 (102 aa).

The protein belongs to the mitochondrion-specific ribosomal protein mL63 family.

It is found in the mitochondrion. This is Large ribosomal subunit protein mL63 (Mrpl57) from Mus musculus (Mouse).